A 147-amino-acid chain; its full sequence is Endoribonuclease YbeY (147 aa).

Positions 109, 113, and 119 each coordinate Zn(2+).

This sequence belongs to the endoribonuclease YbeY family. Zn(2+) is required as a cofactor.

Its subcellular location is the cytoplasm. Its function is as follows. Single strand-specific metallo-endoribonuclease involved in late-stage 70S ribosome quality control and in maturation of the 3' terminus of the 16S rRNA. In Magnetococcus marinus (strain ATCC BAA-1437 / JCM 17883 / MC-1), this protein is Endoribonuclease YbeY.